We begin with the raw amino-acid sequence, 471 residues long: Glutamate--tRNA ligase (471 aa).

The 'HIGH' region signature appears at 10 to 20 (PSPTGFLHIGG). Residues 117 to 137 (GRPPRYDGRWRDRPASERPTD) form a disordered region. A 'KMSKS' region motif is present at residues 239-243 (KLSKR). K242 is an ATP binding site.

It belongs to the class-I aminoacyl-tRNA synthetase family. Glutamate--tRNA ligase type 1 subfamily. Monomer.

It is found in the cytoplasm. The enzyme catalyses tRNA(Glu) + L-glutamate + ATP = L-glutamyl-tRNA(Glu) + AMP + diphosphate. Its function is as follows. Catalyzes the attachment of glutamate to tRNA(Glu) in a two-step reaction: glutamate is first activated by ATP to form Glu-AMP and then transferred to the acceptor end of tRNA(Glu). This chain is Glutamate--tRNA ligase, found in Azorhizobium caulinodans (strain ATCC 43989 / DSM 5975 / JCM 20966 / LMG 6465 / NBRC 14845 / NCIMB 13405 / ORS 571).